Consider the following 282-residue polypeptide: ATP phosphoribosyltransferase (282 aa).

Belongs to the ATP phosphoribosyltransferase family. Long subfamily. It depends on Mg(2+) as a cofactor.

The protein localises to the cytoplasm. The catalysed reaction is 1-(5-phospho-beta-D-ribosyl)-ATP + diphosphate = 5-phospho-alpha-D-ribose 1-diphosphate + ATP. The protein operates within amino-acid biosynthesis; L-histidine biosynthesis; L-histidine from 5-phospho-alpha-D-ribose 1-diphosphate: step 1/9. With respect to regulation, feedback inhibited by histidine. Catalyzes the condensation of ATP and 5-phosphoribose 1-diphosphate to form N'-(5'-phosphoribosyl)-ATP (PR-ATP). Has a crucial role in the pathway because the rate of histidine biosynthesis seems to be controlled primarily by regulation of HisG enzymatic activity. This is ATP phosphoribosyltransferase from Micrococcus luteus (strain ATCC 4698 / DSM 20030 / JCM 1464 / CCM 169 / CCUG 5858 / IAM 1056 / NBRC 3333 / NCIMB 9278 / NCTC 2665 / VKM Ac-2230) (Micrococcus lysodeikticus).